Consider the following 120-residue polypeptide: Large ribosomal subunit protein uL18 (120 aa).

This sequence belongs to the universal ribosomal protein uL18 family. In terms of assembly, part of the 50S ribosomal subunit; part of the 5S rRNA/L5/L18/L25 subcomplex. Contacts the 5S and 23S rRNAs.

Its function is as follows. This is one of the proteins that bind and probably mediate the attachment of the 5S RNA into the large ribosomal subunit, where it forms part of the central protuberance. This Chloroflexus aurantiacus (strain ATCC 29364 / DSM 637 / Y-400-fl) protein is Large ribosomal subunit protein uL18.